Reading from the N-terminus, the 386-residue chain is G2/mitotic-specific cyclin-B2 (386 aa).

The segment at Thr-45–Pro-64 is disordered.

The protein belongs to the cyclin family. Cyclin AB subfamily. As to quaternary structure, interacts with the CDK1 protein kinase to form a serine/threonine kinase holoenzyme complex also known as maturation promoting factor (MPF). The cyclin subunit imparts substrate specificity to the complex.

Its function is as follows. Essential for the control of the cell cycle at the G2/M (mitosis) transition. In Oryzias luzonensis (Luzon ricefish), this protein is G2/mitotic-specific cyclin-B2 (ccnb2).